We begin with the raw amino-acid sequence, 718 residues long: Catalase-peroxidase (718 aa).

Positions 1 to 24 are disordered; it reads MDQKSDNAGKCPVAHTVPKGRSNR. A cross-link (tryptophyl-tyrosyl-methioninium (Trp-Tyr) (with M-243)) is located at residues 95-217; that stretch reads WHSAGTYRIT…LAAVQMGLIY (123 aa). The Proton acceptor role is filled by H96. The tryptophyl-tyrosyl-methioninium (Tyr-Met) (with W-95) cross-link spans 217–243; that stretch reads YVNPEGPNGNPDPVAAAREIRETFARM. H258 lines the heme b pocket.

The protein belongs to the peroxidase family. Peroxidase/catalase subfamily. As to quaternary structure, homodimer or homotetramer. The cofactor is heme b. In terms of processing, formation of the three residue Trp-Tyr-Met cross-link is important for the catalase, but not the peroxidase activity of the enzyme.

The enzyme catalyses H2O2 + AH2 = A + 2 H2O. It catalyses the reaction 2 H2O2 = O2 + 2 H2O. Functionally, bifunctional enzyme with both catalase and broad-spectrum peroxidase activity. The sequence is that of Catalase-peroxidase from Sinorhizobium fredii (strain NBRC 101917 / NGR234).